We begin with the raw amino-acid sequence, 176 residues long: METCRCPLSYLISFLLFLSHSETACRPLGKRPCRMQAFRIWDVNQKTFYLRNNQLVAGYLQGSNTKLEEKLDVVPVEPHAVFLGIHGGKLCLACVKSGDETRLQLEAVNITDLSKNKDQDKRFTFILSDSGPTTSFESAACPGWFLCTALEADRPVSLTNRPEEAMMVTKFYFQKE.

An N-terminal signal peptide occupies residues 1 to 25 (METCRCPLSYLISFLLFLSHSETAC). C91 and C141 are disulfide-bonded. Residue N109 is glycosylated (N-linked (GlcNAc...) asparagine).

The protein belongs to the IL-1 family.

It is found in the secreted. In terms of biological role, anti-inflammatory antagonist of interleukin-1 family of proinflammatory cytokines such as interleukin-1beta/IL1B and interleukin-1alpha/IL1A. Protects from immune dysregulation and uncontrolled systemic inflammation triggered by IL1 for a range of innate stimulatory agents such as pathogens. This Canis lupus familiaris (Dog) protein is Interleukin-1 receptor antagonist protein (IL1RN).